We begin with the raw amino-acid sequence, 106 residues long: Large ribosomal subunit protein uL24 (106 aa).

This sequence belongs to the universal ribosomal protein uL24 family. In terms of assembly, part of the 50S ribosomal subunit.

One of two assembly initiator proteins, it binds directly to the 5'-end of the 23S rRNA, where it nucleates assembly of the 50S subunit. Functionally, one of the proteins that surrounds the polypeptide exit tunnel on the outside of the subunit. In Blochmanniella floridana, this protein is Large ribosomal subunit protein uL24.